A 520-amino-acid chain; its full sequence is Cytosol aminopeptidase (520 aa).

Residues Lys286 and Asp291 each contribute to the Zn(2+) site. Lys298 is an active-site residue. Zn(2+)-binding residues include Asp309, Asp368, and Glu370. Residue Arg372 is part of the active site.

This sequence belongs to the peptidase M17 family. In terms of assembly, homohexamer. Requires Zn(2+) as cofactor.

Its subcellular location is the cytoplasm. It catalyses the reaction Release of an N-terminal amino acid, Xaa-|-Yaa-, in which Xaa is preferably Leu, but may be other amino acids including Pro although not Arg or Lys, and Yaa may be Pro. Amino acid amides and methyl esters are also readily hydrolyzed, but rates on arylamides are exceedingly low.. The enzyme catalyses Release of N-terminal proline from a peptide.. Its function is as follows. Presumably involved in the processing and regular turnover of intracellular proteins. Catalyzes the removal of unsubstituted N-terminal amino acids from various peptides. The polypeptide is Cytosol aminopeptidase (lap) (Dictyostelium discoideum (Social amoeba)).